Consider the following 574-residue polypeptide: MDFEYVTGEEGLKKAIKRLENSPYLYLDTETTGDRIRLVQIGDEENTYVIDLYEIQDIEPLRKLINERGIVGHNLKFDLKYLYRYGIFPSATFDTMIASYLLGYERHSLNHIVSNLLGYSMDKSYQTSDWGASVLSDAQLKYAANDVIVLRELFPKMRDMLNELDAERGEELLKTRTAKIFDLKSPVAIVEMAFVREVAKLEINGFPVDVEELTNKLKAVERETQKRIQEFYIKYRVDPLSPKQLASLLTKKFKLNLPKTPKGNVSTDDKALTSYQDVEPVKLVLEIRKLKKIADKLKELKEHLKNGRVYPEFKQIGAVTGRMSSAHPNIQNIHRDMRGIFKAEEGNTFVISDFSQIELRIAAEYVKDPLMLDAFKKGKDMHRYTASVVLGKKEEEITKEERQLAKAINFGLIYGISAKGLAEYAKLGYGVEISLEEAQVLRERFFKNFKAFKEWHDRVKKELKEKGEVKGHTLLGRRFSANTFNDAVNYPIQGTGADLLKLAVLLFDANLQKKGIDAKLVNLVHDEIVVECEKEKAEEVKEILEKSMKTAGKIILKEVPVEVESVINERWTKD.

The 158-residue stretch at E4–L161 folds into the 3'-5' exonuclease domain.

The protein belongs to the DNA polymerase type-A family.

It catalyses the reaction DNA(n) + a 2'-deoxyribonucleoside 5'-triphosphate = DNA(n+1) + diphosphate. The polypeptide is DNA polymerase I (polA) (Aquifex aeolicus (strain VF5)).